The chain runs to 423 residues: Levansucrase (423 aa).

Sucrose-binding residues include Trp47, Asp48, Ser119, Arg193, and Asp194. The active-site Nucleophile is Asp48. The active-site Proton donor/acceptor is the Glu278.

It belongs to the glycosyl hydrolase 68 family.

It localises to the secreted. It catalyses the reaction [6)-beta-D-fructofuranosyl-(2-&gt;](n) alpha-D-glucopyranoside + sucrose = [6)-beta-D-fructofuranosyl-(2-&gt;](n+1) alpha-D-glucopyranoside + D-glucose. In terms of biological role, catalyzes the synthesis of levan, a fructose polymer, by transferring the fructosyl moiety from sucrose to a growing acceptor molecule. This is Levansucrase from Zymomonas mobilis subsp. mobilis (strain ATCC 10988 / DSM 424 / LMG 404 / NCIMB 8938 / NRRL B-806 / ZM1).